Here is a 234-residue protein sequence, read N- to C-terminus: Glycoprotein BDLF3 (234 aa).

The first 28 residues, 1–28, serve as a signal peptide directing secretion; that stretch reads MAHARDKAGAVMAMILICETSLIWTSSG. The interval 29–62 is disordered; the sequence is SSTASAGNVTGTTAVTTPSPSASGPSTNQSTTLT. 9 N-linked (GlcNAc...) asparagine; by host glycosylation sites follow: Asn36, Asn56, Asn77, Asn96, Asn101, Asn110, Asn127, Asn144, and Asn159. Residues 116–138 are disordered; that stretch reads AGTGTSTGVTSNVTTRSSSTTSA. A helical membrane pass occupies residues 187–207; sequence LVFVGLTFLMLILIFAAGLMM.

This sequence belongs to the Epstein-Barr virus BDLF3 protein family.

It is found in the membrane. The polypeptide is Glycoprotein BDLF3 (Homo sapiens (Human)).